Consider the following 270-residue polypeptide: Formamidopyrimidine-DNA glycosylase (270 aa).

Proline 2 acts as the Schiff-base intermediate with DNA in catalysis. Glutamate 3 serves as the catalytic Proton donor. Lysine 58 (proton donor; for beta-elimination activity) is an active-site residue. The DNA site is built by histidine 90 and arginine 109. The FPG-type zinc-finger motif lies at 237–270; the sequence is KVYGKEGEQCECGHTIERYTLGGRSTFLCSSCQK. Arginine 260 (proton donor; for delta-elimination activity) is an active-site residue.

This sequence belongs to the FPG family. In terms of assembly, monomer. The cofactor is Zn(2+).

The catalysed reaction is Hydrolysis of DNA containing ring-opened 7-methylguanine residues, releasing 2,6-diamino-4-hydroxy-5-(N-methyl)formamidopyrimidine.. It carries out the reaction 2'-deoxyribonucleotide-(2'-deoxyribose 5'-phosphate)-2'-deoxyribonucleotide-DNA = a 3'-end 2'-deoxyribonucleotide-(2,3-dehydro-2,3-deoxyribose 5'-phosphate)-DNA + a 5'-end 5'-phospho-2'-deoxyribonucleoside-DNA + H(+). Involved in base excision repair of DNA damaged by oxidation or by mutagenic agents. Acts as a DNA glycosylase that recognizes and removes damaged bases. Has a preference for oxidized purines, such as 7,8-dihydro-8-oxoguanine (8-oxoG). Has AP (apurinic/apyrimidinic) lyase activity and introduces nicks in the DNA strand. Cleaves the DNA backbone by beta-delta elimination to generate a single-strand break at the site of the removed base with both 3'- and 5'-phosphates. This is Formamidopyrimidine-DNA glycosylase (mutM) from Zymomonas mobilis subsp. mobilis (strain ATCC 31821 / ZM4 / CP4).